The chain runs to 1053 residues: Ubiquitin-like modifier-activating enzyme 6 (1053 aa).

Methionine 1 is modified (N-acetylmethionine). Arginine 46 contributes to the ATP binding site. Threonine 54 is modified (phosphothreonine). ATP contacts are provided by alanine 470 and aspartate 497. Mg(2+) is bound by residues aspartate 499 and glutamate 502. ATP is bound by residues asparagine 505, arginine 508, glutamine 509, and lysine 521. The residue at position 544 (lysine 544) is an N6-acetyllysine. Residue valine 545 participates in ATP binding. Aspartate 569 provides a ligand contact to Mg(2+). Residue asparagine 570 participates in ATP binding. The Glycyl thioester intermediate role is filled by cysteine 625. Residue lysine 729 is modified to N6-acetyllysine. At serine 737 the chain carries Phosphoserine.

It belongs to the ubiquitin-activating E1 family. Forms a thioester with UBD in cells stimulated with tumor necrosis factor-alpha (TNFa) and interferon-gamma (IFNg).

It carries out the reaction ATP + ubiquitin + [E1 ubiquitin-activating enzyme]-L-cysteine = AMP + diphosphate + S-ubiquitinyl-[E1 ubiquitin-activating enzyme]-L-cysteine.. The protein operates within protein modification; protein ubiquitination. Its function is as follows. Activates ubiquitin by first adenylating its C-terminal glycine residue with ATP, and thereafter linking this residue to the side chain of a cysteine residue in E1, yielding a ubiquitin-E1 thioester and free AMP. Specific for ubiquitin, does not activate ubiquitin-like peptides. Also activates UBD/FAT10 conjugation via adenylation of its C-terminal glycine. Differs from UBE1 in its specificity for substrate E2 charging. Does not charge cell cycle E2s, such as CDC34. Essential for embryonic development. This chain is Ubiquitin-like modifier-activating enzyme 6 (Uba6), found in Mus musculus (Mouse).